The chain runs to 143 residues: uncharacterized protein (143 aa).

It localises to the cytoplasm. The protein resides in the nucleus. This is an uncharacterized protein from Schizosaccharomyces pombe (strain 972 / ATCC 24843) (Fission yeast).